We begin with the raw amino-acid sequence, 494 residues long: Glycerol kinase (494 aa).

ADP is bound at residue threonine 13. ATP is bound by residues threonine 13, threonine 14, and serine 15. Sn-glycerol 3-phosphate is bound at residue threonine 13. Residue arginine 17 coordinates ADP. Sn-glycerol 3-phosphate contacts are provided by arginine 83, glutamate 84, tyrosine 135, and aspartate 244. Positions 83, 84, 135, 244, and 245 each coordinate glycerol. Threonine 266 and glycine 309 together coordinate ADP. 4 residues coordinate ATP: threonine 266, glycine 309, glutamine 313, and glycine 410. Positions 410 and 414 each coordinate ADP.

This sequence belongs to the FGGY kinase family.

The catalysed reaction is glycerol + ATP = sn-glycerol 3-phosphate + ADP + H(+). The protein operates within polyol metabolism; glycerol degradation via glycerol kinase pathway; sn-glycerol 3-phosphate from glycerol: step 1/1. Inhibited by fructose 1,6-bisphosphate (FBP). Key enzyme in the regulation of glycerol uptake and metabolism. Catalyzes the phosphorylation of glycerol to yield sn-glycerol 3-phosphate. This chain is Glycerol kinase, found in Shewanella putrefaciens (strain CN-32 / ATCC BAA-453).